Here is a 278-residue protein sequence, read N- to C-terminus: 2-(acetamidomethylene)succinate hydrolase (278 aa).

Residues isoleucine 41 and serine 106–leucine 107 each bind chloride. The active-site Nucleophile is the serine 106. Residues aspartate 130 and histidine 258 contribute to the active site.

The protein belongs to the AB hydrolase superfamily. As to quaternary structure, homodimer.

The catalysed reaction is 2-(acetamidomethylene)succinate + 2 H2O + H(+) = succinate semialdehyde + acetate + NH4(+) + CO2. It participates in cofactor degradation; B6 vitamer degradation. In terms of biological role, catalyzes the final reaction in the degradation of vitamin B6 from (E)-2-(acetamidomethylene)succinate (E-2AMS) to produce succinic semialdehyde, acetate, ammonia and carbon dioxide. This chain is 2-(acetamidomethylene)succinate hydrolase, found in Mesorhizobium japonicum (strain LMG 29417 / CECT 9101 / MAFF 303099) (Mesorhizobium loti (strain MAFF 303099)).